The following is a 641-amino-acid chain: Methylenetetrahydrofolate reductase 2 (641 aa).

E20 serves as the catalytic Proton donor/acceptor. Residues 20–25 (EYFPPK) and 52–53 (TW) contribute to the NAD(+) site. Residues 52–53 (TW), H81, 111–113 (RGD), Y153, D172, and K179 each bind FAD. Substrate is bound at residue D113. Q190 serves as a coordination point for substrate.

The protein belongs to the methylenetetrahydrofolate reductase family. FAD serves as cofactor.

It catalyses the reaction (6S)-5-methyl-5,6,7,8-tetrahydrofolate + NADP(+) = (6R)-5,10-methylene-5,6,7,8-tetrahydrofolate + NADPH + H(+). Its pathway is one-carbon metabolism; tetrahydrofolate interconversion. Functionally, major methylenetetrahydrofolate reductase required to generate the methyl groups necessary for methionine synthetase to convert homocysteine to methionine. Performs 15 to 20 percent of the total methylenetetrahydrofolate reductase activity of the cells. The polypeptide is Methylenetetrahydrofolate reductase 2 (met11) (Schizosaccharomyces pombe (strain 972 / ATCC 24843) (Fission yeast)).